A 327-amino-acid chain; its full sequence is Pyruvate dehydrogenase E1 component subunit beta (327 aa).

Residue Glu60 participates in thiamine diphosphate binding. The K(+) site is built by Val113, Ala161, Ile162, and Glu164.

In terms of assembly, heterodimer of an alpha and a beta chain. It depends on thiamine diphosphate as a cofactor.

It is found in the plastid. The protein localises to the chloroplast. It carries out the reaction N(6)-[(R)-lipoyl]-L-lysyl-[protein] + pyruvate + H(+) = N(6)-[(R)-S(8)-acetyldihydrolipoyl]-L-lysyl-[protein] + CO2. Its function is as follows. The pyruvate dehydrogenase complex catalyzes the overall conversion of pyruvate to acetyl-CoA and CO(2). It contains multiple copies of three enzymatic components: pyruvate dehydrogenase (E1), dihydrolipoamide acetyltransferase (E2) and lipoamide dehydrogenase (E3). This is Pyruvate dehydrogenase E1 component subunit beta (pdhB) from Cyanidium caldarium (Red alga).